A 109-amino-acid chain; its full sequence is Class I hydrophobin SC1 (109 aa).

A signal peptide spans 1 to 22 (MRFSLAILALPVLAAATAVPRG). Cystine bridges form between Cys27–Cys88, Cys34–Cys82, Cys35–Cys69, and Cys89–Cys102.

This sequence belongs to the fungal hydrophobin family. As to quaternary structure, self-assembles to form functional amyloid fibrils called rodlets. Self-assembly into fibrillar rodlets occurs spontaneously at hydrophobic:hydrophilic interfaces and the rodlets further associate laterally to form amphipathic monolayers.

The protein localises to the secreted. It is found in the cell wall. Aerial growth, conidiation, and dispersal of filamentous fungi in the environment rely upon a capability of their secreting small amphipathic proteins called hydrophobins (HPBs) with low sequence identity. Class I can self-assemble into an outermost layer of rodlet bundles on aerial cell surfaces, conferring cellular hydrophobicity that supports fungal growth, development and dispersal; whereas Class II form highly ordered films at water-air interfaces through intermolecular interactions but contribute nothing to the rodlet structure. SC1 is a dikaryon-specific class I hydrophobin that contributes to the formation of aerial hyphae and fruiting bodies. The sequence is that of Class I hydrophobin SC1 from Schizophyllum commune (Split gill fungus).